We begin with the raw amino-acid sequence, 328 residues long: D-cysteine desulfhydrase (328 aa).

Lys51 carries the post-translational modification N6-(pyridoxal phosphate)lysine.

This sequence belongs to the ACC deaminase/D-cysteine desulfhydrase family. As to quaternary structure, homodimer. Pyridoxal 5'-phosphate is required as a cofactor.

It catalyses the reaction D-cysteine + H2O = hydrogen sulfide + pyruvate + NH4(+) + H(+). Functionally, catalyzes the alpha,beta-elimination reaction of D-cysteine and of several D-cysteine derivatives. It could be a defense mechanism against D-cysteine. The sequence is that of D-cysteine desulfhydrase from Salmonella paratyphi C (strain RKS4594).